Reading from the N-terminus, the 37-residue chain is Cytochrome b6-f complex subunit 5 (37 aa).

The helical transmembrane segment at 5–25 (LLCGIVLGLVPVTIAGLFVTA) threads the bilayer.

It belongs to the PetG family. In terms of assembly, the 4 large subunits of the cytochrome b6-f complex are cytochrome b6, subunit IV (17 kDa polypeptide, PetD), cytochrome f and the Rieske protein, while the 4 small subunits are PetG, PetL, PetM and PetN. The complex functions as a dimer.

Its subcellular location is the plastid. It localises to the chloroplast thylakoid membrane. In terms of biological role, component of the cytochrome b6-f complex, which mediates electron transfer between photosystem II (PSII) and photosystem I (PSI), cyclic electron flow around PSI, and state transitions. PetG is required for either the stability or assembly of the cytochrome b6-f complex. The chain is Cytochrome b6-f complex subunit 5 from Chlamydomonas reinhardtii (Chlamydomonas smithii).